We begin with the raw amino-acid sequence, 140 residues long: Putative pre-16S rRNA nuclease (140 aa).

The protein belongs to the YqgF nuclease family.

It localises to the cytoplasm. Its function is as follows. Could be a nuclease involved in processing of the 5'-end of pre-16S rRNA. The sequence is that of Putative pre-16S rRNA nuclease from Edwardsiella ictaluri (strain 93-146).